A 408-amino-acid chain; its full sequence is Branched-chain amino acid aminotransferase 2, chloroplastic (408 aa).

The transit peptide at 1–58 (MDCAAALLPGFHPNYLLCPSRHFSSLLPKTDLSSPLKFQLQNKQLSLASSHGFSPVIC) directs the protein to the chloroplast. Position 152 (Arg-152) interacts with pyridoxal 5'-phosphate. Lys-254 serves as the catalytic Proton acceptor. At Lys-254 the chain carries N6-(pyridoxal phosphate)lysine. Glu-290 contributes to the pyridoxal 5'-phosphate binding site.

It belongs to the class-IV pyridoxal-phosphate-dependent aminotransferase family. Pyridoxal 5'-phosphate is required as a cofactor. As to expression, expressed in lupulin glands and leaves.

The protein resides in the plastid. It is found in the chloroplast. The catalysed reaction is L-isoleucine + 2-oxoglutarate = (S)-3-methyl-2-oxopentanoate + L-glutamate. It carries out the reaction L-leucine + 2-oxoglutarate = 4-methyl-2-oxopentanoate + L-glutamate. The enzyme catalyses L-valine + 2-oxoglutarate = 3-methyl-2-oxobutanoate + L-glutamate. It functions in the pathway amino-acid biosynthesis; L-isoleucine biosynthesis; L-isoleucine from 2-oxobutanoate: step 4/4. The protein operates within amino-acid biosynthesis; L-leucine biosynthesis; L-leucine from 3-methyl-2-oxobutanoate: step 4/4. It participates in amino-acid biosynthesis; L-valine biosynthesis; L-valine from pyruvate: step 4/4. In terms of biological role, converts 2-oxo acids to branched-chain amino acids. Shows no kinetic preferences corresponding to anabolic or catabolic functions, but likely involved in BCAA biosynthesis. The sequence is that of Branched-chain amino acid aminotransferase 2, chloroplastic from Humulus lupulus (European hop).